The following is a 140-amino-acid chain: Ergosterol biosynthetic protein 28 homolog (140 aa).

4 consecutive transmembrane segments (helical) span residues 4-24 (FLNV…GNTL), 52-72 (TFGI…IDIH), 79-99 (ITLW…FVFG), and 105-125 (VGVL…LVGL).

Belongs to the ERG28 family.

It localises to the endoplasmic reticulum membrane. This is Ergosterol biosynthetic protein 28 homolog from Mus musculus (Mouse).